The primary structure comprises 143 residues: Large ribosomal subunit protein uL11 (143 aa).

Belongs to the universal ribosomal protein uL11 family. As to quaternary structure, part of the ribosomal stalk of the 50S ribosomal subunit. Interacts with L10 and the large rRNA to form the base of the stalk. L10 forms an elongated spine to which L12 dimers bind in a sequential fashion forming a multimeric L10(L12)X complex. In terms of processing, one or more lysine residues are methylated.

Functionally, forms part of the ribosomal stalk which helps the ribosome interact with GTP-bound translation factors. The protein is Large ribosomal subunit protein uL11 of Nitrosospira multiformis (strain ATCC 25196 / NCIMB 11849 / C 71).